The primary structure comprises 344 residues: Adenine deaminase (344 aa).

Positions 24, 26, and 204 each coordinate Zn(2+). Catalysis depends on Glu207, which acts as the Proton donor. A Zn(2+)-binding site is contributed by Asp285. Asp286 lines the substrate pocket.

Belongs to the metallo-dependent hydrolases superfamily. Adenosine and AMP deaminases family. Adenine deaminase type 2 subfamily. Requires Zn(2+) as cofactor.

The enzyme catalyses adenine + H2O + H(+) = hypoxanthine + NH4(+). In terms of biological role, catalyzes the hydrolytic deamination of adenine to hypoxanthine. Plays an important role in the purine salvage pathway and in nitrogen catabolism. This chain is Adenine deaminase, found in Caulobacter vibrioides (strain ATCC 19089 / CIP 103742 / CB 15) (Caulobacter crescentus).